Here is a 681-residue protein sequence, read N- to C-terminus: Epithelial splicing regulatory protein 1 (681 aa).

RRM domains are found at residues 225 to 302, 326 to 406, and 445 to 525; these read TVVR…KATG, VIVR…RSTA, and DCIR…QCSA. Residue serine 543 is modified to Phosphoserine. Omega-N-methylarginine is present on arginine 582.

This sequence belongs to the ESRP family. As to expression, epithelial cell-specific.

The protein localises to the nucleus. MRNA splicing factor that regulates the formation of epithelial cell-specific isoforms. Specifically regulates the expression of FGFR2-IIIb, an epithelial cell-specific isoform of FGFR2. Also regulates the splicing of CD44, CTNND1, ENAH, 3 transcripts that undergo changes in splicing during the epithelial-to-mesenchymal transition (EMT). Acts by directly binding specific sequences in mRNAs. Binds the GU-rich sequence motifs in the ISE/ISS-3, a cis-element regulatory region present in the mRNA of FGFR2. Regulates splicing and expression of genes involved in inner ear development, auditory hair cell differentiation, and cell fate specification in the cochlear epithelium. The protein is Epithelial splicing regulatory protein 1 (ESRP1) of Homo sapiens (Human).